The primary structure comprises 385 residues: Protein pelota homolog (385 aa).

A Glycyl lysine isopeptide (Lys-Gly) (interchain with G-Cter in SUMO2) cross-link involves residue Lys162. 4 positions are modified to phosphoserine: Ser374, Ser380, Ser381, and Ser382.

This sequence belongs to the eukaryotic release factor 1 family. Pelota subfamily. As to quaternary structure, component of the Pelota-HBS1L complex, also named Dom34-Hbs1 complex, composed of PELO and HBS1L. Interacts with PINK1. Interacts with ABCE1. Interacts with CNOT4. Requires a divalent metal cation as cofactor.

It localises to the cytoplasm. Functionally, component of the Pelota-HBS1L complex, a complex that recognizes stalled ribosomes and triggers the No-Go Decay (NGD) pathway. In the Pelota-HBS1L complex, PELO recognizes ribosomes stalled at the 3' end of an mRNA and engages stalled ribosomes by destabilizing mRNA in the mRNA channel. Following mRNA extraction from stalled ribosomes by the SKI complex, the Pelota-HBS1L complex promotes recruitment of ABCE1, which drives the disassembly of stalled ribosomes, followed by degradation of damaged mRNAs as part of the NGD pathway. As part of the PINK1-regulated signaling, upon mitochondrial damage is recruited to the ribosome/mRNA-ribonucleoprotein complex associated to mitochondrial outer membrane thereby enabling the recruitment of autophagy receptors and induction of mitophagy. The polypeptide is Protein pelota homolog (Pelo) (Rattus norvegicus (Rat)).